The following is a 494-amino-acid chain: uncharacterized protein (494 aa).

Positions 4–82 (FTITVKKTEG…NMIIEPLEGF (79 aa)) constitute a 2Fe-2S ferredoxin-type domain. Residues C46, C51, C54, and C66 each coordinate [2Fe-2S] cluster. 2 consecutive 4Fe-4S ferredoxin-type domains span residues 127-157 (DLKDVKKIRGCIDCLSCIAMCPARKYSNYPG) and 178-208 (EKEAFDENIYNCTTCGRCVEVCPKEIDIVHN). 8 residues coordinate [4Fe-4S] cluster: C137, C140, C143, C147, C189, C192, C195, and C199.

Belongs to the succinate dehydrogenase/fumarate reductase iron-sulfur protein family.

This is an uncharacterized protein from Methanococcus maripaludis (strain DSM 14266 / JCM 13030 / NBRC 101832 / S2 / LL).